The chain runs to 481 residues: Ras-GEF domain-containing family member 1A (481 aa).

The N-terminal Ras-GEF domain maps to 41-170 (QDGHLISGSL…AIAQMTQSLL (130 aa)). The Ras-GEF domain occupies 214–461 (DPLVLAQQLT…FVASFESEGP (248 aa)).

As to expression, detected in brain and spinal cord. Highly expressed in a number of intrahepatic cholangiocarcinoma tissue biopsies.

Its function is as follows. Guanine nucleotide exchange factor (GEF) with specificity for RAP2A, KRAS, HRAS, and NRAS (in vitro). Plays a role in cell migration. The protein is Ras-GEF domain-containing family member 1A (RASGEF1A) of Homo sapiens (Human).